We begin with the raw amino-acid sequence, 579 residues long: MTTAIRRAAGSSYFRNPWPALWAMMVGFFMIMLDSTVVAIANPTIMAQLRIGYATVVWVTSAYLLAYAVPMLVAGRLGDRFGPKNLYLIGLGVFTVASLGCGLSSGAGMLIAARVVQGVGAGLLTPQTLSTITRIFPAHRRGVALGAWGTVASVASLVGPLAGGALVDSMGWEWIFFVNVPVGVIGLILAAYLIPALPHHPHRFDWFGVGLSGAGMFLIVFGLQQGQSANWQPWIWAVIVGGIGFMSLFVYWQARNAREPLIPLEVFNDRNFSLSNLRIAIIAFAGTGMMLPVTFYAQAVCGLSPTHTAVLFAPTAIVGGVLAPFVGMIIDRSHPLCVLGFGFSVLAIAMTWLLCEMAPGTPIWRLVLPFIALGVAGAFVWSPLTVTATRNLRPHLAGASSGVFNAVRQLGAVLGSASMAAFMTSRIAAEMPGGVDALTGPAGQDATVLQLPEFVREPFAAAMSQSMLLPAFVALFGIVAALFLVDFTGAAVAKEPLPESDGDADDDDYVEYILRREPEEDCDTQPLRASRPAAAAASRSGAGGPLAVSWSTSAQGMPPGPPGRRAWQADTESTAPSAL.

The next 12 helical transmembrane spans lie at 20–40, 54–74, 86–106, 142–162, 174–194, 204–224, 234–254, 279–299, 310–330, 335–355, 366–386, and 467–487; these read ALWA…VVAI, ATVV…MLVA, LYLI…LSSG, GVAL…GPLA, WIFF…AYLI, FDWF…FGLQ, WIWA…YWQA, IAII…YAQA, VLFA…GMII, PLCV…WLLC, LVLP…PLTV, and MLLP…LVDF. A disordered region spans residues 516 to 579; the sequence is REPEEDCDTQ…DTESTAPSAL (64 aa). Residues 526-540 are compositionally biased toward low complexity; the sequence is PLRASRPAAAAASRS. Residues 570-579 show a composition bias toward polar residues; the sequence is DTESTAPSAL.

It belongs to the major facilitator superfamily. EmrB family.

It is found in the cell membrane. This is an uncharacterized protein from Mycobacterium tuberculosis (strain ATCC 25618 / H37Rv).